The chain runs to 264 residues: Mannose-specific lectin CEA (264 aa).

The N-terminal stretch at 1-23 (MAKLLLFLLPAILGLLVPRSAVA) is a signal peptide. 2 Bulb-type lectin domains span residues 26–131 (TNYL…PWVP) and 145–252 (NNLL…PQAK). Beta-D-mannose is bound by residues 51-55 (QDDCN), Tyr59, Trp63, Gln64, 170-174 (QGDCN), Tyr178, and 182-185 (YGWQ). The Carbohydrate-binding motif 1 signature appears at 51–59 (QDDCNLVLY). Disulfide bonds link Cys54/Cys74 and Cys173/Cys195. The short motif at 170-178 (QGDCNLVLY) is the Carbohydrate-binding motif 2 element.

Forms heterotetramer of 2 chains 1 and 2 chains 2 arranged as a dimer of chain 1 and chain 2 heterodimers.

It localises to the secreted. Functionally, mannose-specific lectin. Shows agglutinating activity towards erythrocytes from rabbit. Has insecticidal activity against cotton aphids and other hemipteran insects. The chain is Mannose-specific lectin CEA from Colocasia esculenta (Wild taro).